Consider the following 286-residue polypeptide: Release factor glutamine methyltransferase (286 aa).

Residues 121-125 (GTGTG), Asp144, Trp172, and Asn188 contribute to the S-adenosyl-L-methionine site. A substrate-binding site is contributed by 188 to 191 (NPPY).

The protein belongs to the protein N5-glutamine methyltransferase family. PrmC subfamily.

It catalyses the reaction L-glutaminyl-[peptide chain release factor] + S-adenosyl-L-methionine = N(5)-methyl-L-glutaminyl-[peptide chain release factor] + S-adenosyl-L-homocysteine + H(+). Methylates the class 1 translation termination release factors RF1/PrfA and RF2/PrfB on the glutamine residue of the universally conserved GGQ motif. This Vibrio cholerae serotype O1 (strain ATCC 39315 / El Tor Inaba N16961) protein is Release factor glutamine methyltransferase.